The primary structure comprises 282 residues: Formamidopyrimidine-DNA glycosylase (282 aa).

P2 serves as the catalytic Schiff-base intermediate with DNA. E3 acts as the Proton donor in catalysis. K61 serves as the catalytic Proton donor; for beta-elimination activity. DNA contacts are provided by H93, R112, and K158. An FPG-type zinc finger spans residues 244 to 278 (DAYGREGEPCRRCGAIMRRDKFMNRSSFYCPRCQP). The active-site Proton donor; for delta-elimination activity is R268.

This sequence belongs to the FPG family. As to quaternary structure, monomer. Requires Zn(2+) as cofactor.

The enzyme catalyses Hydrolysis of DNA containing ring-opened 7-methylguanine residues, releasing 2,6-diamino-4-hydroxy-5-(N-methyl)formamidopyrimidine.. The catalysed reaction is 2'-deoxyribonucleotide-(2'-deoxyribose 5'-phosphate)-2'-deoxyribonucleotide-DNA = a 3'-end 2'-deoxyribonucleotide-(2,3-dehydro-2,3-deoxyribose 5'-phosphate)-DNA + a 5'-end 5'-phospho-2'-deoxyribonucleoside-DNA + H(+). In terms of biological role, involved in base excision repair of DNA damaged by oxidation or by mutagenic agents. Acts as a DNA glycosylase that recognizes and removes damaged bases. Has a preference for oxidized purines, such as 7,8-dihydro-8-oxoguanine (8-oxoG). Has AP (apurinic/apyrimidinic) lyase activity and introduces nicks in the DNA strand. Cleaves the DNA backbone by beta-delta elimination to generate a single-strand break at the site of the removed base with both 3'- and 5'-phosphates. In Mycolicibacterium gilvum (strain PYR-GCK) (Mycobacterium gilvum (strain PYR-GCK)), this protein is Formamidopyrimidine-DNA glycosylase.